A 263-amino-acid polypeptide reads, in one-letter code: MPEGPEIRRAADKLVEAVVGKTLTRVWFAFPELKPYEAELVGQQVRQIATRGKALLTYFSNDRVLYSHNQLYGVWRVVNAGESPETKRDLRVRLETQNRAILLYSASDIEMLTPEALTTHPFLQRIGPDVLDLSLTPEQVYERLLLPRFRRRQFSGLLLDQAFLAGLGNYLRVEILWQAQLAPQHTAAQLNEEQLQTLSQALLEIPRLSYNTRGTVDENHHHGAIFSFKVFHRDGESCERCGGIIERTMLSSRPFYWCPHCQR.

Residue Pro-2 is the Schiff-base intermediate with DNA of the active site. Glu-3 acts as the Proton donor in catalysis. The Proton donor; for beta-elimination activity role is filled by Lys-53. DNA contacts are provided by Gln-70, Arg-125, and Asn-169. The segment at 229–263 adopts an FPG-type zinc-finger fold; the sequence is KVFHRDGESCERCGGIIERTMLSSRPFYWCPHCQR. The active-site Proton donor; for delta-elimination activity is Arg-253.

This sequence belongs to the FPG family. The cofactor is Zn(2+).

It carries out the reaction 2'-deoxyribonucleotide-(2'-deoxyribose 5'-phosphate)-2'-deoxyribonucleotide-DNA = a 3'-end 2'-deoxyribonucleotide-(2,3-dehydro-2,3-deoxyribose 5'-phosphate)-DNA + a 5'-end 5'-phospho-2'-deoxyribonucleoside-DNA + H(+). Its function is as follows. Involved in base excision repair of DNA damaged by oxidation or by mutagenic agents. Acts as a DNA glycosylase that recognizes and removes damaged bases. Has a preference for oxidized pyrimidines, such as thymine glycol, 5,6-dihydrouracil and 5,6-dihydrothymine. Has AP (apurinic/apyrimidinic) lyase activity and introduces nicks in the DNA strand. Cleaves the DNA backbone by beta-delta elimination to generate a single-strand break at the site of the removed base with both 3'- and 5'-phosphates. This Pectobacterium carotovorum subsp. carotovorum (strain PC1) protein is Endonuclease 8.